Consider the following 122-residue polypeptide: Large ribosomal subunit protein bL12 (122 aa).

The protein belongs to the bacterial ribosomal protein bL12 family. In terms of assembly, homodimer. Part of the ribosomal stalk of the 50S ribosomal subunit. Forms a multimeric L10(L12)X complex, where L10 forms an elongated spine to which 2 to 4 L12 dimers bind in a sequential fashion. Binds GTP-bound translation factors.

Functionally, forms part of the ribosomal stalk which helps the ribosome interact with GTP-bound translation factors. Is thus essential for accurate translation. The protein is Large ribosomal subunit protein bL12 of Mycoplasma capricolum subsp. capricolum (strain California kid / ATCC 27343 / NCTC 10154).